The primary structure comprises 600 residues: DNA primase (600 aa).

The CHC2-type zinc finger occupies 38-62 (CPFHDEKTPSFIVYPTRGHYHCYGC). One can recognise a Toprim domain in the interval 253 to 333 (KRVILVEGQA…GIAVIVCRLP (81 aa)). E259, D304, and D306 together coordinate Mg(2+).

It belongs to the DnaG primase family. In terms of assembly, monomer. Interacts with DnaB. Requires Zn(2+) as cofactor. Mg(2+) is required as a cofactor.

The enzyme catalyses ssDNA + n NTP = ssDNA/pppN(pN)n-1 hybrid + (n-1) diphosphate.. In terms of biological role, RNA polymerase that catalyzes the synthesis of short RNA molecules used as primers for DNA polymerase during DNA replication. The protein is DNA primase of Chlamydia muridarum (strain MoPn / Nigg).